The chain runs to 50 residues: Photosystem I reaction center subunit IX (50 aa).

A helical membrane pass occupies residues 7 to 27; it reads YLSTAPVLAILCCSFLAGLVI.

It belongs to the PsaJ family.

The protein resides in the plastid. The protein localises to the chloroplast thylakoid membrane. Functionally, may help in the organization of the PsaE and PsaF subunits. This is Photosystem I reaction center subunit IX from Pinus koraiensis (Korean pine).